A 368-amino-acid polypeptide reads, in one-letter code: GLABROUS1 enhancer-binding protein-like (368 aa).

The interval 1–123 (MAPKKAEEVV…TSDTEHVKKP (123 aa)) is disordered. Over residues 17-31 (SEEEESGSSGEESES) the composition is skewed to acidic residues. A compositionally biased stretch (basic and acidic residues) spans 35–47 (VPKKVESSQKPES). Residues 84-97 (TSGSAATVPESSTA) are compositionally biased toward polar residues. Basic and acidic residues predominate over residues 100 to 123 (PLKEAAPEAIKKQKTSDTEHVKKP).

Belongs to the GeBP family. In terms of assembly, mono-, di- and oligomers. Associated with the Mediator complex. Interacts with MED6. Interacts with MED10A, MED28 and MED32. Interacts with DEK3.

The protein localises to the nucleus. Its function is as follows. Transcription factor that binds promoters containing the CryR2 element, 5'-ACATAWCT-3'. The DNA-binding activity is decreased upon direct physical interaction with the mediator subunits and is modulated by redox conditions. The oxidized protein is the preferential binding form. This Arabidopsis thaliana (Mouse-ear cress) protein is GLABROUS1 enhancer-binding protein-like.